A 487-amino-acid polypeptide reads, in one-letter code: Virulence sensor histidine kinase PhoQ (487 aa).

The Cytoplasmic segment spans residues 1–16 (MNKFARHFLPLSLRVR). A helical membrane pass occupies residues 17–37 (FLLATAGVVLVLSLAYGIVAL). The Periplasmic segment spans residues 38–193 (VGYSVSFDKT…ELKRSYMVWS (156 aa)). D151 and D152 together coordinate a divalent metal cation. Residues 194 to 214 (WFVYVLAANLLLVIPLLWIAA) form a helical membrane-spanning segment. The HAMP domain occupies 215–266 (WWSLRPIEALAREVRELEDHHREMLNPETTRELTSLVRNLNQLLKSERERYN). Residues 215–487 (WWSLRPIEAL…GRQHPTQKEE (273 aa)) are Cytoplasmic-facing. Residues 274–481 (DLTHSLKTPL…RMEVVFGRQH (208 aa)) enclose the Histidine kinase domain. H277 is modified (phosphohistidine; by autocatalysis). N386 contributes to the Mg(2+) binding site. Residues 386-394 (NVLDNACKY), 416-421 (DDGPGI), and 435-447 (RADTLRPGQGVGL) each bind ATP. Q443 lines the Mg(2+) pocket.

Homodimer.

It localises to the cell inner membrane. The catalysed reaction is ATP + protein L-histidine = ADP + protein N-phospho-L-histidine.. In terms of biological role, member of the two-component regulatory system PhoP/PhoQ which regulates the expression of genes involved in virulence and resistance to host defense antimicrobial peptides. In low periplasmic Mg(2+), PhoQ functions as a membrane-associated protein kinase that undergoes autophosphorylation and subsequently transfers the phosphate to PhoP, which results in the expression of PhoP-activated genes (PAG) and repression of PhoP-repressed genes (PRG). In high periplasmic Mg(2+), acts as a protein phosphatase that dephosphorylates phospho-PhoP, which results in the repression of PAG and may lead to expression of some PRG. The protein is Virulence sensor histidine kinase PhoQ (phoQ) of Salmonella paratyphi A (strain ATCC 9150 / SARB42).